We begin with the raw amino-acid sequence, 333 residues long: NADH-quinone oxidoreductase subunit H (333 aa).

The next 8 membrane-spanning stretches (helical) occupy residues 15-35 (LVIF…FVTY), 88-108 (FILA…TLPF), 117-137 (IGVG…GVVA), 159-179 (ISYE…TGSL), 191-211 (VWYI…AVAE), 250-270 (LFAM…PVMF), 273-293 (FIPG…VLIW), and 313-333 (VLFP…ELFF).

The protein belongs to the complex I subunit 1 family. NDH-1 is composed of 14 different subunits. Subunits NuoA, H, J, K, L, M, N constitute the membrane sector of the complex.

Its subcellular location is the cell membrane. It carries out the reaction a quinone + NADH + 5 H(+)(in) = a quinol + NAD(+) + 4 H(+)(out). Functionally, NDH-1 shuttles electrons from NADH, via FMN and iron-sulfur (Fe-S) centers, to quinones in the respiratory chain. The immediate electron acceptor for the enzyme in this species is believed to be ubiquinone. Couples the redox reaction to proton translocation (for every two electrons transferred, four hydrogen ions are translocated across the cytoplasmic membrane), and thus conserves the redox energy in a proton gradient. This subunit may bind ubiquinone. In Geobacillus sp. (strain WCH70), this protein is NADH-quinone oxidoreductase subunit H.